Reading from the N-terminus, the 441-residue chain is G2/mitotic-specific cyclin-2 (441 aa).

It belongs to the cyclin family. Cyclin AB subfamily. As to quaternary structure, interacts with the CDC2 and CDK2 protein kinases to form a serine/threonine kinase holoenzyme complex. The cyclin subunit imparts substrate specificity to the complex.

Essential for the control of the cell cycle at the G2/M (mitosis) transition. G2/M cyclins accumulate steadily during G2 and are abruptly destroyed at mitosis. The sequence is that of G2/mitotic-specific cyclin-2 from Antirrhinum majus (Garden snapdragon).